The primary structure comprises 279 residues: Pantothenate synthetase (279 aa).

26-33 (MGNLHEGH) lines the ATP pocket. H33 serves as the catalytic Proton donor. Q57 contributes to the (R)-pantoate binding site. Residue Q57 coordinates beta-alanine. 144-147 (GKKD) serves as a coordination point for ATP. Q150 contacts (R)-pantoate. ATP contacts are provided by residues V173 and 181–184 (LSSR).

Belongs to the pantothenate synthetase family. As to quaternary structure, homodimer.

The protein resides in the cytoplasm. The catalysed reaction is (R)-pantoate + beta-alanine + ATP = (R)-pantothenate + AMP + diphosphate + H(+). It functions in the pathway cofactor biosynthesis; (R)-pantothenate biosynthesis; (R)-pantothenate from (R)-pantoate and beta-alanine: step 1/1. Functionally, catalyzes the condensation of pantoate with beta-alanine in an ATP-dependent reaction via a pantoyl-adenylate intermediate. The protein is Pantothenate synthetase of Burkholderia lata (strain ATCC 17760 / DSM 23089 / LMG 22485 / NCIMB 9086 / R18194 / 383).